A 1025-amino-acid chain; its full sequence is Multidrug resistance protein MdtC (1025 aa).

Transmembrane regions (helical) follow at residues Phe3 to Leu23, Glu333 to Leu353, Ile360 to Cys380, Leu387 to Leu407, Val431 to Leu451, Phe463 to Pro483, Leu528 to Pro548, Val853 to Ser873, Val875 to Leu895, Leu897 to Val917, Pro953 to Gly973, and Ile984 to Val1004.

This sequence belongs to the resistance-nodulation-cell division (RND) (TC 2.A.6) family. MdtC subfamily. As to quaternary structure, part of a tripartite efflux system composed of MdtA, MdtB and MdtC. MdtC forms a heteromultimer with MdtB.

It localises to the cell inner membrane. In terms of biological role, the MdtABC tripartite complex confers resistance against novobiocin and deoxycholate. The sequence is that of Multidrug resistance protein MdtC from Escherichia coli O81 (strain ED1a).